Here is a 64-residue protein sequence, read N- to C-terminus: Prokaryotic ubiquitin-like protein Pup (64 aa).

Positions 1-11 (MAQEQTKRTGG) are enriched in basic and acidic residues. The tract at residues 1–38 (MAQEQTKRTGGGDEDDTPGGDGAAGQERREKLAEDTDD) is disordered. The tract at residues 21–58 (DGAAGQERREKLAEDTDDLLDEIDDVLEENAEDFVRAY) is ARC ATPase binding. Residues 24–52 (AGQERREKLAEDTDDLLDEIDDVLEENAE) are a coiled coil. Glutamine 64 is subject to Deamidated glutamine. Glutamine 64 is covalently cross-linked (Isoglutamyl lysine isopeptide (Gln-Lys) (interchain with K-? in acceptor proteins)).

The protein belongs to the prokaryotic ubiquitin-like protein family. In terms of assembly, strongly interacts with the proteasome-associated ATPase ARC through a hydrophobic interface; the interacting region of Pup lies in its C-terminal half. There is one Pup binding site per ARC hexamer ring. In terms of processing, is modified by deamidation of its C-terminal glutamine to glutamate by the deamidase Dop, a prerequisite to the subsequent pupylation process.

The protein operates within protein degradation; proteasomal Pup-dependent pathway. Functionally, protein modifier that is covalently attached to lysine residues of substrate proteins, thereby targeting them for proteasomal degradation. The tagging system is termed pupylation. This is Prokaryotic ubiquitin-like protein Pup from Rhodococcus opacus (strain B4).